The primary structure comprises 1902 residues: PII-type proteinase (1902 aa).

Positions 1 to 33 are cleaved as a signal peptide; that stretch reads MQRKKKGLSILLAGTVALGALAVLPVGEIQAKA. A propeptide spanning residues 34–187 is cleaved from the precursor; that stretch reads AISQQTKVSS…VTLAKVYYPT (154 aa). In terms of domain architecture, Peptidase S8 spans 191–697; sequence ANSMANVQAV…AGLVDVKAAI (507 aa). Active-site charge relay system residues include D217, H281, and S620. The segment covering 1793 to 1805 has biased composition (low complexity); the sequence is KTAGKGDDTTGTS. A disordered region spans residues 1793–1872; the sequence is KTAGKGDDTT…GKGALPKTAE (80 aa). Positions 1867–1871 match the LPXTG sorting signal motif; sequence LPKTA. A Pentaglycyl murein peptidoglycan amidated threonine modification is found at T1870. A propeptide spans 1871–1902 (removed by sortase); the sequence is AETTERPAFGFLGVIVVSLMGVLGLKRKQREE.

It belongs to the peptidase S8 family.

It localises to the secreted. The protein resides in the cell wall. The enzyme catalyses Endopeptidase activity with very broad specificity, although some subsite preference have been noted, e.g. large hydrophobic residues in the P1 and P4 positions, and Pro in the P2 position. Best known for its action on caseins, although it has been shown to hydrolyze hemoglobin and oxidized insulin B-chain.. Functionally, protease which breaks down milk proteins during the growth of the bacteria on milk. In Lacticaseibacillus paracasei (Lactobacillus paracasei), this protein is PII-type proteinase (prtP).